Reading from the N-terminus, the 155-residue chain is MVSSCCGSVCSDQGCSQDLCQETCCRPSCCQTTCCRTTCYRPSCCVSSCCRPQCCQSVCCQPTCCRPTCCETTCCHPRCCISSCCRPSCCMSSCCKPQCCQSVCCQPTCCRPSCCRPCCCLRPVCGRVSCHTTCYRPTCVISTCPRPLCCASSCC.

20 consecutive repeat copies span residues 5–9 (CCGSV), 24–28 (CCRPS), 29–33 (CCQTT), 34–38 (CCRTT), 44–48 (CCVSS), 49–53 (CCRPQ), 54–58 (CCQSV), 59–63 (CCQPT), 64–68 (CCRPT), 69–73 (CCETT), 74–78 (CCHPR), 79–83 (CCISS), 84–88 (CCRPS), 89–93 (CCMSS), 94–98 (CCKPQ), 99–103 (CCQSV), 104–108 (CCQPT), 109–113 (CCRPS), 114–118 (CCRPC), and 119–123 (CCLRP). A 20 X 5 AA repeats of C-C-[GIKRQVHEML]-[SPTRV]-[STVQRCP] region spans residues 5–123 (CCGSVCSDQG…CCRPCCCLRP (119 aa)).

It belongs to the KRTAP type 4 family. Interacts with hair keratins. As to expression, expressed in the hair follicles.

Functionally, in the hair cortex, hair keratin intermediate filaments are embedded in an interfilamentous matrix, consisting of hair keratin-associated proteins (KRTAP), which are essential for the formation of a rigid and resistant hair shaft through their extensive disulfide bond cross-linking with abundant cysteine residues of hair keratins. The matrix proteins include the high-sulfur and high-glycine-tyrosine keratins. This is Keratin-associated protein 4-7 (KRTAP4-7) from Homo sapiens (Human).